Here is a 285-residue protein sequence, read N- to C-terminus: Bifunctional protein FolD (285 aa).

NADP(+) is bound by residues 165–167 and serine 190; that span reads GRS.

It belongs to the tetrahydrofolate dehydrogenase/cyclohydrolase family. In terms of assembly, homodimer.

The catalysed reaction is (6R)-5,10-methylene-5,6,7,8-tetrahydrofolate + NADP(+) = (6R)-5,10-methenyltetrahydrofolate + NADPH. It carries out the reaction (6R)-5,10-methenyltetrahydrofolate + H2O = (6R)-10-formyltetrahydrofolate + H(+). It functions in the pathway one-carbon metabolism; tetrahydrofolate interconversion. Functionally, catalyzes the oxidation of 5,10-methylenetetrahydrofolate to 5,10-methenyltetrahydrofolate and then the hydrolysis of 5,10-methenyltetrahydrofolate to 10-formyltetrahydrofolate. The protein is Bifunctional protein FolD of Burkholderia orbicola (strain AU 1054).